The primary structure comprises 488 residues: Transmembrane protein 39A (488 aa).

N-linked (GlcNAc...) asparagine glycosylation is found at Asn-31 and Asn-39. The next 8 membrane-spanning stretches (helical) occupy residues 72-92 (SLLF…IQYI), 110-130 (TSLN…VMLA), 154-174 (VLIS…CWTL), 182-202 (SVLN…LCCF), 287-307 (EVLF…LCFV), 319-339 (CEHL…QLLP), 420-440 (LLNL…YSLL), and 446-466 (NHTL…FKLL).

The protein belongs to the TMEM39 family. In terms of assembly, interacts with SACM1L, SEC23A and SEC24A.

The protein localises to the endoplasmic reticulum membrane. Functionally, regulates autophagy by controlling the spatial distribution and levels of the intracellular phosphatidylinositol 4-phosphate (PtdIns(4)P) pools. Modulates (PtdIns(4)P) levels by regulating the ER-to-Golgi trafficking of the phosphatidylinositide phosphatase SACM1L. The protein is Transmembrane protein 39A (TMEM39A) of Bos taurus (Bovine).